The primary structure comprises 162 residues: uncharacterized protein (162 aa).

It is found in the cytoplasm. Its subcellular location is the nucleus. This is an uncharacterized protein from Schizosaccharomyces pombe (strain 972 / ATCC 24843) (Fission yeast).